The primary structure comprises 401 residues: Formate-dependent phosphoribosylglycinamide formyltransferase (401 aa).

Residues Glu-22 to Leu-23 and Glu-82 each bind N(1)-(5-phospho-beta-D-ribosyl)glycinamide. Residues Arg-115, Lys-157, Ser-162–Gln-167, Glu-197–Val-200, and Glu-205 each bind ATP. Positions Arg-120 to Leu-315 constitute an ATP-grasp domain. Mg(2+)-binding residues include Glu-274 and Glu-286. N(1)-(5-phospho-beta-D-ribosyl)glycinamide is bound by residues Asp-293, Lys-362, and Arg-369–Arg-370.

This sequence belongs to the PurK/PurT family. In terms of assembly, homodimer.

It carries out the reaction N(1)-(5-phospho-beta-D-ribosyl)glycinamide + formate + ATP = N(2)-formyl-N(1)-(5-phospho-beta-D-ribosyl)glycinamide + ADP + phosphate + H(+). It participates in purine metabolism; IMP biosynthesis via de novo pathway; N(2)-formyl-N(1)-(5-phospho-D-ribosyl)glycinamide from N(1)-(5-phospho-D-ribosyl)glycinamide (formate route): step 1/1. Involved in the de novo purine biosynthesis. Catalyzes the transfer of formate to 5-phospho-ribosyl-glycinamide (GAR), producing 5-phospho-ribosyl-N-formylglycinamide (FGAR). Formate is provided by PurU via hydrolysis of 10-formyl-tetrahydrofolate. This Polaromonas naphthalenivorans (strain CJ2) protein is Formate-dependent phosphoribosylglycinamide formyltransferase.